The sequence spans 133 residues: Large ribosomal subunit protein bL20 (133 aa).

Belongs to the bacterial ribosomal protein bL20 family.

Functionally, binds directly to 23S ribosomal RNA and is necessary for the in vitro assembly process of the 50S ribosomal subunit. It is not involved in the protein synthesizing functions of that subunit. This chain is Large ribosomal subunit protein bL20, found in Rubrobacter xylanophilus (strain DSM 9941 / JCM 11954 / NBRC 16129 / PRD-1).